We begin with the raw amino-acid sequence, 293 residues long: DDRGK domain-containing protein 1 (293 aa).

The Lumenal segment spans residues 1–6 (MWGPLI). A helical membrane pass occupies residues 7 to 27 (YALLGLAIVAAAFLFVRRSQA). Residues 28 to 293 (KEVVPVADDD…PADVDETTTA (266 aa)) lie on the Cytoplasmic side of the membrane. Disordered stretches follow at residues 30–151 (VVPV…RQKE) and 273–293 (TDVE…TTTA). Composition is skewed to basic and acidic residues over residues 90–126 (KLQE…KERE) and 133–151 (ERQR…RQKE).

It belongs to the DDRGK1 family.

Its subcellular location is the endoplasmic reticulum membrane. In terms of biological role, substrate adapter for ufmylation, the covalent attachment of the ubiquitin-like modifier UFM1 to substrate proteins. This Monosiga brevicollis (Choanoflagellate) protein is DDRGK domain-containing protein 1.